A 480-amino-acid polypeptide reads, in one-letter code: REST corepressor 1 (480 aa).

Positions 1-105 are disordered; it reads MPAMVEKGPE…GGGMRVGPQY (105 aa). Composition is skewed to low complexity over residues 21-58 and 66-89; these read AASAASAAASAASAAASAAASAGTASASAAAAASAAAA and SLAAAAPNGNSGSNSWEEGSSGSS. The segment at 72 to 251 is interaction with HDAC1; it reads PNGNSGSNSW…RHARKQKRER (180 aa). Residues 97-183 form the ELM2 domain; that stretch reads GGMRVGPQYQ…KSLADLPNFT (87 aa). K116 is covalently cross-linked (Glycyl lysine isopeptide (Lys-Gly) (interchain with G-Cter in SUMO2)). S121 bears the Phosphoserine mark. An SANT 1 domain is found at 184-235; it reads PFPDEWTVEDKVLFEQAFSFHGKTFHRIQQMLPDKSIASLVKFYYSWKKTRT. A coiled-coil region spans residues 238–265; that stretch reads SVMDRHARKQKREREESEDELEETNGSN. A disordered region spans residues 238–308; it reads SVMDRHARKQ…AKNRAKRKPP (71 aa). S254 is subject to Phosphoserine. The segment covering 272 to 282 has biased composition (basic and acidic residues); that stretch reads DPNKESKKEVP. The segment at 290-378 is interaction with KDM1A; it reads VKKEKHSTQA…LPEVIQKCNA (89 aa). A Glycyl lysine isopeptide (Lys-Gly) (interchain with G-Cter in SUMO2) cross-link involves residue K291. Positions 328 to 363 form a coiled coil; that stretch reads ATTVLRQLDMELVSIKRQIQNIKQTNSALKEKLDGG. The SANT 2 domain occupies 375 to 426; it reads KCNARWTTEEQLLAVQAIRKYGRDFQAISDVIGNKSVVQVKNFFVNYRRRFN. Positions 436 to 466 are disordered; the sequence is AEHGKDETNGPANQKPVKSPESSIKIPEEED. A Phosphoserine modification is found at S454. A Glycyl lysine isopeptide (Lys-Gly) (interchain with G-Cter in SUMO2) cross-link involves residue K460.

It belongs to the CoREST family. As to quaternary structure, component of a BHC histone deacetylase complex that contains HDAC1, HDAC2, HMG20B/BRAF35, KDM1A, RCOR1/CoREST and PHF21A/BHC80. The BHC complex may also contain ZMYM2, ZNF217, ZMYM3, GSE1 and GTF2I. Interacts with REST. Interacts with the SMARCE1/BAF57, suggesting that the BHC complex may recruit the ATP-dependent chromatin-remodeling SWI-SNF complex. Interacts directly with GFI1 and GFI1B in a RCOR/GFI/KDM1A/HDAC complex. Interacts with INMS1. Interacts with SOX2. As to expression, expressed in the external germinal layer (EGL) and internal granular layer (IGL) of the cerebellum and in Purkinje cells (at protein level).

It localises to the nucleus. Its function is as follows. Essential component of the BHC complex, a corepressor complex that represses transcription of neuron-specific genes in non-neuronal cells. The BHC complex is recruited at RE1/NRSE sites by REST and acts by deacetylating and demethylating specific sites on histones, thereby acting as a chromatin modifier. In the BHC complex, it serves as a molecular beacon for the recruitment of molecular machinery, including MeCP2 and SUV39H1, that imposes silencing across a chromosomal interval. Plays a central role in demethylation of Lys-4 of histone H3 by promoting demethylase activity of KDM1A on core histones and nucleosomal substrates. It also protects KDM1A from the proteasome. Component of a RCOR/GFI/KDM1A/HDAC complex that suppresses, via histone deacetylase (HDAC) recruitment, a number of genes implicated in multilineage blood cell development and controls hematopoietic differentiation. In Mus musculus (Mouse), this protein is REST corepressor 1 (Rcor1).